A 314-amino-acid polypeptide reads, in one-letter code: 2,3,4,5-tetrahydropyridine-2,6-dicarboxylate N-succinyltransferase (314 aa).

The Mg(2+) site is built by Asp163 and Glu180. Residue Glu196 is the Acyl-anhydride intermediate of the active site. Residues Arg198, Gly213, Ser216, Ala239, 254–255, Gly262, Lys274, and 287–290 contribute to the succinyl-CoA site; these read EA and RRNS.

This sequence belongs to the type 2 tetrahydrodipicolinate N-succinyltransferase family. In terms of assembly, homotrimer.

It is found in the cytoplasm. The catalysed reaction is (S)-2,3,4,5-tetrahydrodipicolinate + succinyl-CoA + H2O = (S)-2-succinylamino-6-oxoheptanedioate + CoA. Its pathway is amino-acid biosynthesis; L-lysine biosynthesis via DAP pathway; LL-2,6-diaminopimelate from (S)-tetrahydrodipicolinate (succinylase route): step 1/3. Functionally, catalyzes the conversion of the cyclic tetrahydrodipicolinate (THDP) into the acyclic N-succinyl-L-2-amino-6-oxopimelate using succinyl-CoA. The protein is 2,3,4,5-tetrahydropyridine-2,6-dicarboxylate N-succinyltransferase of Mycolicibacterium smegmatis (strain ATCC 700084 / mc(2)155) (Mycobacterium smegmatis).